Reading from the N-terminus, the 178-residue chain is Large ribosomal subunit protein uL6 (178 aa).

It belongs to the universal ribosomal protein uL6 family. In terms of assembly, part of the 50S ribosomal subunit.

Functionally, this protein binds to the 23S rRNA, and is important in its secondary structure. It is located near the subunit interface in the base of the L7/L12 stalk, and near the tRNA binding site of the peptidyltransferase center. This chain is Large ribosomal subunit protein uL6, found in Corynebacterium urealyticum (strain ATCC 43042 / DSM 7109).